The primary structure comprises 374 residues: Queuine tRNA-ribosyltransferase (374 aa).

The active-site Proton acceptor is the D89. Substrate is bound by residues 89 to 93, D143, Q187, and G214; that span reads DSGGF. Residues 245-251 are RNA binding; it reads GVGKPED. The active-site Nucleophile is the D264. Residues 269–273 form an RNA binding; important for wobble base 34 recognition region; that stretch reads TRNAR. Residues C302, C304, C307, and H333 each coordinate Zn(2+).

The protein belongs to the queuine tRNA-ribosyltransferase family. In terms of assembly, homodimer. Within each dimer, one monomer is responsible for RNA recognition and catalysis, while the other monomer binds to the replacement base PreQ1. Zn(2+) is required as a cofactor.

It carries out the reaction 7-aminomethyl-7-carbaguanine + guanosine(34) in tRNA = 7-aminomethyl-7-carbaguanosine(34) in tRNA + guanine. It functions in the pathway tRNA modification; tRNA-queuosine biosynthesis. Its function is as follows. Catalyzes the base-exchange of a guanine (G) residue with the queuine precursor 7-aminomethyl-7-deazaguanine (PreQ1) at position 34 (anticodon wobble position) in tRNAs with GU(N) anticodons (tRNA-Asp, -Asn, -His and -Tyr). Catalysis occurs through a double-displacement mechanism. The nucleophile active site attacks the C1' of nucleotide 34 to detach the guanine base from the RNA, forming a covalent enzyme-RNA intermediate. The proton acceptor active site deprotonates the incoming PreQ1, allowing a nucleophilic attack on the C1' of the ribose to form the product. After dissociation, two additional enzymatic reactions on the tRNA convert PreQ1 to queuine (Q), resulting in the hypermodified nucleoside queuosine (7-(((4,5-cis-dihydroxy-2-cyclopenten-1-yl)amino)methyl)-7-deazaguanosine). This Shewanella sp. (strain W3-18-1) protein is Queuine tRNA-ribosyltransferase.